An 88-amino-acid chain; its full sequence is EKC/KEOPS complex subunit SPAC4H3.13 (88 aa).

Belongs to the CTAG/PCC1 family. Component of the EKC/KEOPS complex composed of at least of SPAP27G11.07c/BUD32, cgi121, gon7, pgp2 and SPAC4H3.13/PCC1; the whole complex dimerizes.

It localises to the cytoplasm. It is found in the nucleus. Its subcellular location is the chromosome. The protein localises to the telomere. Its function is as follows. Component of the EKC/KEOPS complex that is required for the formation of a threonylcarbamoyl group on adenosine at position 37 (t(6)A37) in tRNAs that read codons beginning with adenine. The complex is probably involved in the transfer of the threonylcarbamoyl moiety of threonylcarbamoyl-AMP (TC-AMP) to the N6 group of A37. SPAC4H3.13/PCC1 functions as a dimerization module for the complex. The EKC/KEOPS complex also promotes both telomere uncapping and telomere elongation. The complex is required for efficient recruitment of transcriptional coactivators. This Schizosaccharomyces pombe (strain 972 / ATCC 24843) (Fission yeast) protein is EKC/KEOPS complex subunit SPAC4H3.13.